A 104-amino-acid chain; its full sequence is Pyrimidine/purine nucleoside phosphorylase (104 aa).

It belongs to the nucleoside phosphorylase PpnP family.

The enzyme catalyses a purine D-ribonucleoside + phosphate = a purine nucleobase + alpha-D-ribose 1-phosphate. The catalysed reaction is adenosine + phosphate = alpha-D-ribose 1-phosphate + adenine. It carries out the reaction cytidine + phosphate = cytosine + alpha-D-ribose 1-phosphate. It catalyses the reaction guanosine + phosphate = alpha-D-ribose 1-phosphate + guanine. The enzyme catalyses inosine + phosphate = alpha-D-ribose 1-phosphate + hypoxanthine. The catalysed reaction is thymidine + phosphate = 2-deoxy-alpha-D-ribose 1-phosphate + thymine. It carries out the reaction uridine + phosphate = alpha-D-ribose 1-phosphate + uracil. It catalyses the reaction xanthosine + phosphate = alpha-D-ribose 1-phosphate + xanthine. Catalyzes the phosphorolysis of diverse nucleosides, yielding D-ribose 1-phosphate and the respective free bases. Can use uridine, adenosine, guanosine, cytidine, thymidine, inosine and xanthosine as substrates. Also catalyzes the reverse reactions. The chain is Pyrimidine/purine nucleoside phosphorylase from Syntrophotalea carbinolica (strain DSM 2380 / NBRC 103641 / GraBd1) (Pelobacter carbinolicus).